We begin with the raw amino-acid sequence, 89 residues long: Large ribosomal subunit protein bL27 (89 aa).

Residues 1–22 (MAHTKKGGSSRNGRDSESKRLG) form a disordered region.

This sequence belongs to the bacterial ribosomal protein bL27 family.

This is Large ribosomal subunit protein bL27 from Brucella melitensis biotype 1 (strain ATCC 23456 / CCUG 17765 / NCTC 10094 / 16M).